A 412-amino-acid chain; its full sequence is Branched-chain alpha-ketoacid dehydrogenase kinase (412 aa).

A mitochondrion-targeting transit peptide spans 1-30 (MILASVLGSGPRGGPPLRPLLGPALSLRAR). The residue at position 31 (S31) is a Phosphoserine. Position 52 is a phosphoserine; by autocatalysis (S52). The Histidine kinase domain maps to 159-404 (LDDHKDVVTL…DVYLRLRHID (246 aa)). N6-acetyllysine is present on residues K192 and K233. ATP contacts are provided by N279 and D315. Position 279 (N279) interacts with Mg(2+). K(+) is bound by residues V328, D330, and F333. 2 residues coordinate ATP: T334 and T335. S356 and S360 each carry phosphoserine. Positions 364, 367, and 370 each coordinate ATP. G367 contacts K(+).

Belongs to the PDK/BCKDK protein kinase family. In terms of assembly, homodimer. Homotetramer. Dimerizes through interaction of two opposing nucleotide-binding domains. Interacts with E2 component of the branched-chain alpha-ketoacid dehydrogenase (BCKDH) complex. Competes with BCKDK for binding to the E2 component; this interaction is modulated by branched-chain alpha-keto acids. At steady state, BCKDH holoenzyme contains BCKDK and BCKDHA is phosphorylated. In response to high levels of branched-chain alpha-keto acids, the inhibitory BCKDK is replaced by activating PPM1K leading to BCKDHA dephosphorylation and BCAA degradation. Autophosphorylated.

Its subcellular location is the mitochondrion matrix. The protein localises to the mitochondrion. The enzyme catalyses L-seryl-[3-methyl-2-oxobutanoate dehydrogenase] + ATP = O-phospho-L-seryl-[3-methyl-2-oxobutanoate dehydrogenase] + ADP + H(+). It carries out the reaction L-seryl-[protein] + ATP = O-phospho-L-seryl-[protein] + ADP + H(+). Its function is as follows. Serine/threonine-protein kinase component of macronutrients metabolism. Forms a functional kinase and phosphatase pair with PPM1K, serving as a metabolic regulatory node that coordinates branched-chain amino acids (BCAAs) with glucose and lipid metabolism via two distinct phosphoprotein targets: mitochondrial BCKDHA subunit of the branched-chain alpha-ketoacid dehydrogenase (BCKDH) complex and cytosolic ACLY, a lipogenic enzyme of Krebs cycle. Phosphorylates and inactivates mitochondrial BCKDH complex a multisubunit complex consisting of three multimeric components each involved in different steps of BCAA catabolism: E1 composed of BCKDHA and BCKDHB, E2 core composed of DBT monomers, and E3 composed of DLD monomers. Associates with the E2 component of BCKDH complex and phosphorylates BCKDHA on Ser-347, leading to conformational changes that interrupt substrate channeling between E1 and E2 and inactivates the BCKDH complex. Phosphorylates ACLY on Ser-455 in response to changes in cellular carbohydrate abundance such as occurs during fasting to feeding metabolic transition. Refeeding stimulates MLXIPL/ChREBP transcription factor, leading to increased BCKDK to PPM1K expression ratio, phosphorylation and activation of ACLY that ultimately results in the generation of malonyl-CoA and oxaloacetate immediate substrates of de novo lipogenesis and glucogenesis, respectively. Recognizes phosphosites having SxxE/D canonical motif. This chain is Branched-chain alpha-ketoacid dehydrogenase kinase (BCKDK), found in Bos taurus (Bovine).